Consider the following 1177-residue polypeptide: Dynein axonemal assembly factor 9 (1177 aa).

The interval 1 to 27 (MDVYPPRRQGLPRARSPGGSSRGSPSV) is disordered. A compositionally biased stretch (low complexity) spans 11-27 (LPRARSPGGSSRGSPSV).

As to quaternary structure, interacts with ARL3.

May act as an effector for ARL3. The polypeptide is Dynein axonemal assembly factor 9 (Homo sapiens (Human)).